The sequence spans 410 residues: Histidine--tRNA ligase (410 aa).

Belongs to the class-II aminoacyl-tRNA synthetase family. Homodimer.

It localises to the cytoplasm. The catalysed reaction is tRNA(His) + L-histidine + ATP = L-histidyl-tRNA(His) + AMP + diphosphate + H(+). This Campylobacter hominis (strain ATCC BAA-381 / DSM 21671 / CCUG 45161 / LMG 19568 / NCTC 13146 / CH001A) protein is Histidine--tRNA ligase.